The sequence spans 219 residues: MEWSEIFHDITERHDFKEMHDFLEKEYTTQTIYPDRDNIYQAFDLTPFEDVKVVILGQDPYHGPNQAHGLAFSVQPSAKFPPSLRNMYQELEDDIGCHRTSPHLQDWAREGVLLLNTVLTVRQGQAHSHKDIGWETFTDEVIQAISKYRDDVVFILWGKPAQQKIKLIDTSKHYIIKSPHPSPLSAYRGFFGSKPYSKTNDYLVSKGKSPINWCENGED.

Asp59 serves as the catalytic Proton acceptor.

This sequence belongs to the uracil-DNA glycosylase (UDG) superfamily. UNG family.

It is found in the cytoplasm. It carries out the reaction Hydrolyzes single-stranded DNA or mismatched double-stranded DNA and polynucleotides, releasing free uracil.. Its function is as follows. Excises uracil residues from the DNA which can arise as a result of misincorporation of dUMP residues by DNA polymerase or due to deamination of cytosine. This is Uracil-DNA glycosylase from Staphylococcus haemolyticus (strain JCSC1435).